The following is a 252-amino-acid chain: Demethylmenaquinone methyltransferase (252 aa).

S-adenosyl-L-methionine-binding positions include threonine 64, aspartate 85, and 112–113; that span reads NA.

It belongs to the class I-like SAM-binding methyltransferase superfamily. MenG/UbiE family.

The enzyme catalyses a 2-demethylmenaquinol + S-adenosyl-L-methionine = a menaquinol + S-adenosyl-L-homocysteine + H(+). It functions in the pathway quinol/quinone metabolism; menaquinone biosynthesis; menaquinol from 1,4-dihydroxy-2-naphthoate: step 2/2. In terms of biological role, methyltransferase required for the conversion of demethylmenaquinol (DMKH2) to menaquinol (MKH2). The sequence is that of Demethylmenaquinone methyltransferase from Lactococcus lactis subsp. lactis (strain IL1403) (Streptococcus lactis).